We begin with the raw amino-acid sequence, 389 residues long: Putative F-box protein At1g47790 (389 aa).

Residues 19–65 (SKPTSSFPLDLASEILLRLPVKSVVRFRCVSKLWSSIITDPYFIKTY) form the F-box domain.

This chain is Putative F-box protein At1g47790, found in Arabidopsis thaliana (Mouse-ear cress).